The chain runs to 369 residues: Anhydro-N-acetylmuramic acid kinase (369 aa).

12 to 19 (GTSMDGVD) provides a ligand contact to ATP.

The protein belongs to the anhydro-N-acetylmuramic acid kinase family.

The catalysed reaction is 1,6-anhydro-N-acetyl-beta-muramate + ATP + H2O = N-acetyl-D-muramate 6-phosphate + ADP + H(+). It functions in the pathway amino-sugar metabolism; 1,6-anhydro-N-acetylmuramate degradation. The protein operates within cell wall biogenesis; peptidoglycan recycling. Functionally, catalyzes the specific phosphorylation of 1,6-anhydro-N-acetylmuramic acid (anhMurNAc) with the simultaneous cleavage of the 1,6-anhydro ring, generating MurNAc-6-P. Is required for the utilization of anhMurNAc either imported from the medium or derived from its own cell wall murein, and thus plays a role in cell wall recycling. This Shewanella sp. (strain ANA-3) protein is Anhydro-N-acetylmuramic acid kinase.